A 79-amino-acid chain; its full sequence is Methionine-rich peptide X (79 aa).

An N-terminal signal peptide occupies residues Met-1 to Ala-22. The tract at residues Lys-37–Lys-79 is disordered.

In terms of processing, protein is oxidized (possibly on Met residues) when cells are exposed to chlorite or hypochlorite; initially the protein is highly oxidized, by 50 minutes all protein is in the reduced form.

The protein resides in the periplasm. In terms of biological role, serves as an oxidative stress sink, specifically for chlorite and hypochlorite. The protein is Methionine-rich peptide X of Azospira oryzae (strain ATCC BAA-33 / DSM 13638 / PS) (Dechlorosoma suillum).